The chain runs to 468 residues: Mitochondrial distribution and morphology protein 10 (468 aa).

Over residues 370–386 the composition is skewed to basic and acidic residues; sequence ERDGLPGIQRDDHDMHH. Positions 370–394 are disordered; sequence ERDGLPGIQRDDHDMHHHPQRPHAS.

Belongs to the MDM10 family. In terms of assembly, component of the ER-mitochondria encounter structure (ERMES) or MDM complex, composed of MMM1, MDM10, MDM12 and MDM34. Associates with the mitochondrial outer membrane sorting assembly machinery SAM(core) complex.

The protein localises to the mitochondrion outer membrane. Component of the ERMES/MDM complex, which serves as a molecular tether to connect the endoplasmic reticulum and mitochondria. Components of this complex are involved in the control of mitochondrial shape and protein biogenesis and may function in phospholipid exchange. MDM10 is involved in the late assembly steps of the general translocase of the mitochondrial outer membrane (TOM complex). Functions in the TOM40-specific route of the assembly of outer membrane beta-barrel proteins, including the association of TOM40 with the receptor TOM22 and small TOM proteins. Can associate with the SAM(core) complex as well as the MDM12-MMM1 complex, both involved in late steps of the major beta-barrel assembly pathway, that is responsible for biogenesis of all outer membrane beta-barrel proteins. May act as a switch that shuttles between both complexes and channels precursor proteins into the TOM40-specific pathway. Plays a role in mitochondrial morphology and in the inheritance of mitochondria. The sequence is that of Mitochondrial distribution and morphology protein 10 from Ajellomyces dermatitidis (strain ER-3 / ATCC MYA-2586) (Blastomyces dermatitidis).